We begin with the raw amino-acid sequence, 159 residues long: Eukaryotic translation initiation factor 5A-4 (159 aa).

Over residues 1–12 the composition is skewed to basic and acidic residues; the sequence is MSDEEHQFESKA. Residues 1 to 21 form a disordered region; that stretch reads MSDEEHQFESKADAGASKTYP. A Hypusine modification is found at Lys52.

This sequence belongs to the eIF-5A family. Lys-52 undergoes hypusination, a unique post-translational modification that consists in the addition of a butylamino group from spermidine to lysine side chain, leading to the formation of the unusual amino acid hypusine. eIF-5As are the only known proteins to undergo this modification, which is essential for their function.

Functionally, translation factor that promotes translation elongation and termination, particularly upon ribosome stalling at specific amino acid sequence contexts. Binds between the exit (E) and peptidyl (P) site of the ribosome and promotes rescue of stalled ribosome: specifically required for efficient translation of polyproline-containing peptides as well as other motifs that stall the ribosome. Acts as a ribosome quality control (RQC) cofactor by joining the RQC complex to facilitate peptidyl transfer during CAT tailing step. The chain is Eukaryotic translation initiation factor 5A-4 (EIF5A4) from Solanum tuberosum (Potato).